Consider the following 430-residue polypeptide: Palmitoyltransferase ZDHHC11 (430 aa).

Topologically, residues 1 to 46 (MTNLNCFGRHRRRTAPHNATGSRSELVAPPIHSRINGWSSPLHSFQ) are cytoplasmic. Residues 47 to 67 (FIALLIFSFMAIVAFGIYVPL) traverse the membrane as a helical segment. The Lumenal segment spans residues 68 to 76 (LPAPWSYAA). The chain crosses the membrane as a helical span at residues 77 to 97 (YALIGSAFVLHLFSHVTAVTI). Residues 98–176 (DPADVNVRRR…GGRNYWFFFT (79 aa)) are Cytoplasmic-facing. The DHHC domain occupies 129–179 (LHCTLCEVDVSPKAKHCSTCNKCIADFDHHCKWLNNCVGGRNYWFFFTAVS). The S-palmitoyl cysteine intermediate role is filled by C159. The helical transmembrane segment at 177–197 (AVSSAVIGVILLIPLVLFVFI) threads the bilayer. Residues 198-234 (EHYVNPAVLRTAPQFQTVKGNGTWLVFLPVAPVETSS) lie on the Lumenal side of the membrane. A helical transmembrane segment spans residues 235–255 (ISLLVVSFITALLSLAALLLL). Topologically, residues 256-430 (CHLLCFHIYL…QYLHFKQKMP (175 aa)) are cytoplasmic.

This sequence belongs to the DHHC palmitoyltransferase family.

The protein localises to the endoplasmic reticulum membrane. The enzyme catalyses L-cysteinyl-[protein] + hexadecanoyl-CoA = S-hexadecanoyl-L-cysteinyl-[protein] + CoA. In terms of biological role, endoplasmic reticulum-localized palmitoyltransferase that could catalyze the addition of palmitate onto protein substrates. The chain is Palmitoyltransferase ZDHHC11 from Danio rerio (Zebrafish).